The following is a 250-amino-acid chain: uncharacterized protein (250 aa).

4Fe-4S ferredoxin-type domains are found at residues 38-67, 69-98, 124-153, 154-183, 191-220, and 220-249; these read KLLY…KAKV, KSAK…VIEG, KKYE…AVRR, KSIE…VERE, RDIE…QDGD, and DKVK…MWEK. Cys-47, Cys-50, Cys-53, Cys-57, Cys-78, Cys-81, Cys-84, Cys-88, Cys-133, Cys-136, Cys-139, Cys-143, Cys-163, Cys-166, Cys-169, Cys-173, Cys-200, Cys-203, Cys-206, Cys-210, Cys-229, Cys-232, Cys-235, and Cys-239 together coordinate [4Fe-4S] cluster.

This is an uncharacterized protein from Methanocaldococcus jannaschii (strain ATCC 43067 / DSM 2661 / JAL-1 / JCM 10045 / NBRC 100440) (Methanococcus jannaschii).